The primary structure comprises 304 residues: Ribonuclease Z (304 aa).

Zn(2+) contacts are provided by His64, His66, Asp68, His69, His141, Asp209, and His267. The active-site Proton acceptor is the Asp68.

The protein belongs to the RNase Z family. In terms of assembly, homodimer. Requires Zn(2+) as cofactor.

It catalyses the reaction Endonucleolytic cleavage of RNA, removing extra 3' nucleotides from tRNA precursor, generating 3' termini of tRNAs. A 3'-hydroxy group is left at the tRNA terminus and a 5'-phosphoryl group is left at the trailer molecule.. Zinc phosphodiesterase, which displays some tRNA 3'-processing endonuclease activity. Probably involved in tRNA maturation, by removing a 3'-trailer from precursor tRNA. This chain is Ribonuclease Z, found in Thermoplasma volcanium (strain ATCC 51530 / DSM 4299 / JCM 9571 / NBRC 15438 / GSS1).